We begin with the raw amino-acid sequence, 247 residues long: 3-deoxy-manno-octulosonate cytidylyltransferase (247 aa).

The protein belongs to the KdsB family.

The protein localises to the cytoplasm. It catalyses the reaction 3-deoxy-alpha-D-manno-oct-2-ulosonate + CTP = CMP-3-deoxy-beta-D-manno-octulosonate + diphosphate. The protein operates within nucleotide-sugar biosynthesis; CMP-3-deoxy-D-manno-octulosonate biosynthesis; CMP-3-deoxy-D-manno-octulosonate from 3-deoxy-D-manno-octulosonate and CTP: step 1/1. It participates in bacterial outer membrane biogenesis; lipopolysaccharide biosynthesis. In terms of biological role, activates KDO (a required 8-carbon sugar) for incorporation into bacterial lipopolysaccharide in Gram-negative bacteria. The polypeptide is 3-deoxy-manno-octulosonate cytidylyltransferase (Bdellovibrio bacteriovorus (strain ATCC 15356 / DSM 50701 / NCIMB 9529 / HD100)).